A 1521-amino-acid chain; its full sequence is Suppressor of Ty 6 homolog (1521 aa).

The interval 1–204 (MDFIDNQAEE…EGAEDDARDV (204 aa)) is disordered. Residues 26 to 41 (KKMKMAKDKLKKKKKV) show a composition bias toward basic residues. Positions 26-42 (KKMKMAKDKLKKKKKVV) match the Nuclear localization signal motif. 2 stretches are compositionally biased toward acidic residues: residues 45-56 (SDEDEDDEDDEE) and 67-76 (ADEDDEEEDA). Positions 77-89 (RSEKSDRSRRSEI) are enriched in basic and acidic residues. Positions 90–103 (NDELDDEDLDLIDE) are enriched in acidic residues. Residues 127–149 (PIRRSNQDDDDLQSERGSDDGDK) are compositionally biased toward basic and acidic residues. The segment covering 167 to 177 (RSEDDFIEDDG) has biased composition (acidic residues). One can recognise an S1 motif domain in the interval 1182–1251 (LNAGRPGGCV…EKFSILLSCK (70 aa)). The SH2 domain occupies 1299–1388 (HPNFHNVSYE…IARFVLPMIQ (90 aa)). A disordered region spans residues 1490–1521 (GIRSSLSYRPTGRTGPPPSAPYQQPPQQQYYR). Over residues 1504 to 1513 (GPPPSAPYQQ) the composition is skewed to pro residues.

The protein belongs to the SPT6 family. In terms of assembly, interacts with glp-1 and lin-12.

It localises to the nucleus. Its function is as follows. Histone H3-H4 chaperone that plays a role in maintenance of chromatin structure during RNA polymerase II transcription elongation. May be required for several aspects of morphogenesis of C.briggsae, including regulation of division in the germline and gut and specification of ventral-uterine precursor cell fate. This is Suppressor of Ty 6 homolog (emb-5) from Caenorhabditis briggsae.